We begin with the raw amino-acid sequence, 394 residues long: Bifunctional enzyme Fae/Hps (394 aa).

The formaldehyde-activating enzyme stretch occupies residues M1 to F162. The active-site Proton donor is the H18. Residues D20, L49, K67, T69, and Q84 each coordinate substrate. Residues V163–F394 are 3-hexulose-6-phosphate synthase.

This sequence in the N-terminal section; belongs to the formaldehyde-activating enzyme family. It in the C-terminal section; belongs to the HPS/KGPDC family. HPS subfamily.

The catalysed reaction is 5,6,7,8-tetrahydromethanopterin + formaldehyde = 5,10-methylenetetrahydromethanopterin + H2O. It carries out the reaction D-ribulose 5-phosphate + formaldehyde = D-arabino-hex-3-ulose 6-phosphate. It functions in the pathway carbohydrate biosynthesis; D-ribose 5-phosphate biosynthesis. Its function is as follows. Catalyzes the condensation of formaldehyde with tetrahydromethanopterin (H(4)MPT) to 5,10-methylenetetrahydromethanopterin. In terms of biological role, catalyzes the reversible formation of ribulose-5-phosphate and formaldehyde from 3-hexulose-6-phosphate. The protein is Bifunctional enzyme Fae/Hps of Archaeoglobus fulgidus (strain ATCC 49558 / DSM 4304 / JCM 9628 / NBRC 100126 / VC-16).